The following is a 115-amino-acid chain: Large ribosomal subunit protein mL60 (115 aa).

Residues 1 to 23 (MLGAFNSTLARFGGLVHKVPWRL) constitute a mitochondrion transit peptide. A disordered region spans residues 88-115 (AGLQGFRKGVHKSPKWTRSTNRVNPTGF). Residues 103–115 (WTRSTNRVNPTGF) show a composition bias toward polar residues.

The protein belongs to the mitochondrion-specific ribosomal protein mL60 family. In terms of assembly, component of the mitochondrial large ribosomal subunit (mt-LSU). Mature yeast 74S mitochondrial ribosomes consist of a small (37S) and a large (54S) subunit. The 37S small subunit contains a 15S ribosomal RNA (15S mt-rRNA) and at least 32 different proteins. The 54S large subunit contains a 21S rRNA (21S mt-rRNA) and at least 45 different proteins.

It is found in the mitochondrion. Its function is as follows. Component of the mitochondrial ribosome (mitoribosome), a dedicated translation machinery responsible for the synthesis of mitochondrial genome-encoded proteins, including at least some of the essential transmembrane subunits of the mitochondrial respiratory chain. The mitoribosomes are attached to the mitochondrial inner membrane and translation products are cotranslationally integrated into the membrane. This is Large ribosomal subunit protein mL60 (mrpl31) from Schizosaccharomyces pombe (strain 972 / ATCC 24843) (Fission yeast).